A 504-amino-acid polypeptide reads, in one-letter code: Topoisomerase I damage affected protein 11 (504 aa).

A disordered region spans residues 32-62 (RKTGRKIRSASSNGYRLEHHRTSSAGSMHSQ). Residues 179-231 (ALLQSLATKELELLECKQKIEDLKKQTQHEEQNYTRRARELHELKEQVSKHLD) are a coiled coil. Position 236 is a phosphothreonine (Thr-236). Ser-244 and Ser-286 each carry phosphoserine. Disordered stretches follow at residues 252-306 (LESR…SKQS), 332-377 (WDDS…SVSR), and 400-504 (DVIT…MTDF). Residues 257-287 (ENAGNSSLPSSVSKPKNMGHQSTNQSRSVSP) show a composition bias toward polar residues. The segment covering 290–301 (IQERRQRDDSSD) has biased composition (basic and acidic residues). Polar residues-rich tracts occupy residues 332–359 (WDDS…QQYD) and 368–377 (KSPSQGSVSR). Basic and acidic residues predominate over residues 403–421 (TDNRCDPVYKSDRQHEQKK). Basic residues predominate over residues 470–479 (TREKKSKRSS). Over residues 491 to 504 (DNSSVKNSVEMTDF) the composition is skewed to polar residues.

The protein belongs to the TDA11 family.

It localises to the cytoplasm. The chain is Topoisomerase I damage affected protein 11 (TDA11) from Saccharomyces cerevisiae (strain Lalvin EC1118 / Prise de mousse) (Baker's yeast).